Reading from the N-terminus, the 388-residue chain is MKIHEYQGKDILRQFGVPVPRGIPAFTVQEAVEAAQKLGGPVWVVKAQIHAGGRGKGGGVQLAKTIDEVRRLAGSMLGMQLKTHQTGPEGQKVRRLYIEEGADIGKEYYLSIVTDRATQKLAFIASSEGGMDIEEVKRAKPEMIITEFVDPLAGLGPEQALKIAVGIGLPAPAQAQAQAVDIMRRLYQCYMDTDASLLEINPLNCDGQNRLTALDAKFNFDANALWRHPEIVAYRDFEEEDPAEVLASKFDLAYISMDGNIGCLVNGAGLAMATMDTIKLFGGAPANFLDVGGGATAEKVTEAFKIMLGNPKVKGILVNIFGGIMRCDTIATGVISACKAVNLSVPLVVRMKGTNEEPGKKLLAESGLPIIAADTMADAAQRIVAAVR.

Positions 9-246 (KDILRQFGVP…FEEEDPAEVL (238 aa)) constitute an ATP-grasp domain. ATP-binding positions include K46, 53-55 (GRG), E99, A102, and E107. 2 residues coordinate Mg(2+): N201 and D215. Residues N266 and 323-325 (GIM) contribute to the substrate site.

Belongs to the succinate/malate CoA ligase beta subunit family. In terms of assembly, heterotetramer of two alpha and two beta subunits. The cofactor is Mg(2+).

The catalysed reaction is succinate + ATP + CoA = succinyl-CoA + ADP + phosphate. The enzyme catalyses GTP + succinate + CoA = succinyl-CoA + GDP + phosphate. It participates in carbohydrate metabolism; tricarboxylic acid cycle; succinate from succinyl-CoA (ligase route): step 1/1. In terms of biological role, succinyl-CoA synthetase functions in the citric acid cycle (TCA), coupling the hydrolysis of succinyl-CoA to the synthesis of either ATP or GTP and thus represents the only step of substrate-level phosphorylation in the TCA. The beta subunit provides nucleotide specificity of the enzyme and binds the substrate succinate, while the binding sites for coenzyme A and phosphate are found in the alpha subunit. The sequence is that of Succinate--CoA ligase [ADP-forming] subunit beta from Verminephrobacter eiseniae (strain EF01-2).